The chain runs to 327 residues: UDP-N-acetylenolpyruvoylglucosamine reductase (327 aa).

One can recognise an FAD-binding PCMH-type domain in the interval 42–223; sequence RTGGLAELFY…RAAMDEVALH (182 aa). Arg-188 is a catalytic residue. Residue Ser-237 is the Proton donor of the active site. Glu-307 is an active-site residue.

Belongs to the MurB family. FAD serves as cofactor.

The protein localises to the cytoplasm. It carries out the reaction UDP-N-acetyl-alpha-D-muramate + NADP(+) = UDP-N-acetyl-3-O-(1-carboxyvinyl)-alpha-D-glucosamine + NADPH + H(+). Its pathway is cell wall biogenesis; peptidoglycan biosynthesis. Cell wall formation. The polypeptide is UDP-N-acetylenolpyruvoylglucosamine reductase (Bartonella tribocorum (strain CIP 105476 / IBS 506)).